The chain runs to 190 residues: Pyridoxal 5'-phosphate synthase subunit PdxT (190 aa).

46–48 (GES) contacts L-glutamine. Catalysis depends on Cys78, which acts as the Nucleophile. L-glutamine contacts are provided by residues Arg105 and 133–134 (IR). Active-site charge relay system residues include His169 and Glu171.

The protein belongs to the glutaminase PdxT/SNO family. In terms of assembly, in the presence of PdxS, forms a dodecamer of heterodimers. Only shows activity in the heterodimer.

It catalyses the reaction aldehydo-D-ribose 5-phosphate + D-glyceraldehyde 3-phosphate + L-glutamine = pyridoxal 5'-phosphate + L-glutamate + phosphate + 3 H2O + H(+). The catalysed reaction is L-glutamine + H2O = L-glutamate + NH4(+). It functions in the pathway cofactor biosynthesis; pyridoxal 5'-phosphate biosynthesis. In terms of biological role, catalyzes the hydrolysis of glutamine to glutamate and ammonia as part of the biosynthesis of pyridoxal 5'-phosphate. The resulting ammonia molecule is channeled to the active site of PdxS. The polypeptide is Pyridoxal 5'-phosphate synthase subunit PdxT (Niallia circulans (Bacillus circulans)).